The chain runs to 549 residues: Glucose-6-phosphate isomerase (549 aa).

The active-site Proton donor is the glutamate 355. Residues histidine 387 and lysine 515 contribute to the active site.

It belongs to the GPI family.

The protein localises to the cytoplasm. It catalyses the reaction alpha-D-glucose 6-phosphate = beta-D-fructose 6-phosphate. It participates in carbohydrate biosynthesis; gluconeogenesis. It functions in the pathway carbohydrate degradation; glycolysis; D-glyceraldehyde 3-phosphate and glycerone phosphate from D-glucose: step 2/4. In terms of biological role, catalyzes the reversible isomerization of glucose-6-phosphate to fructose-6-phosphate. This Haemophilus influenzae (strain 86-028NP) protein is Glucose-6-phosphate isomerase.